A 695-amino-acid chain; its full sequence is Elongation factor G 2 (695 aa).

Residues 5 to 280 (SKYRNIGIFA…AVVDYLPSPT (276 aa)) form the tr-type G domain. GTP contacts are provided by residues 14–21 (AHVDAGKT), 78–82 (DTPGH), and 132–135 (NKLD).

The protein belongs to the TRAFAC class translation factor GTPase superfamily. Classic translation factor GTPase family. EF-G/EF-2 subfamily.

It is found in the cytoplasm. Functionally, catalyzes the GTP-dependent ribosomal translocation step during translation elongation. During this step, the ribosome changes from the pre-translocational (PRE) to the post-translocational (POST) state as the newly formed A-site-bound peptidyl-tRNA and P-site-bound deacylated tRNA move to the P and E sites, respectively. Catalyzes the coordinated movement of the two tRNA molecules, the mRNA and conformational changes in the ribosome. This Photobacterium profundum (strain SS9) protein is Elongation factor G 2.